Reading from the N-terminus, the 357-residue chain is Holliday junction branch migration complex subunit RuvB (357 aa).

Polar residues predominate over residues 1-10; that stretch reads MAIQSDSLSS. Residues 1–30 form a disordered region; the sequence is MAIQSDSLSSRPDAPRLVAPAPASPNEESI. A large ATPase domain (RuvB-L) region spans residues 5–195; it reads SDSLSSRPDA…FGIVSRLEFY (191 aa). ATP contacts are provided by residues L34, R35, G76, K79, T80, T81, 142–144, R185, Y195, and R232; that span reads EDF. T80 provides a ligand contact to Mg(2+). The tract at residues 196–266 is small ATPAse domain (RuvB-S); sequence NTDDLAHIVT…AANQALAMLE (71 aa). The head domain (RuvB-H) stretch occupies residues 269 to 357; sequence PQGLDLMDRK…QPSSGDLFGA (89 aa). Residues R305, R324, and R329 each coordinate DNA.

It belongs to the RuvB family. Homohexamer. Forms an RuvA(8)-RuvB(12)-Holliday junction (HJ) complex. HJ DNA is sandwiched between 2 RuvA tetramers; dsDNA enters through RuvA and exits via RuvB. An RuvB hexamer assembles on each DNA strand where it exits the tetramer. Each RuvB hexamer is contacted by two RuvA subunits (via domain III) on 2 adjacent RuvB subunits; this complex drives branch migration. In the full resolvosome a probable DNA-RuvA(4)-RuvB(12)-RuvC(2) complex forms which resolves the HJ.

Its subcellular location is the cytoplasm. It carries out the reaction ATP + H2O = ADP + phosphate + H(+). In terms of biological role, the RuvA-RuvB-RuvC complex processes Holliday junction (HJ) DNA during genetic recombination and DNA repair, while the RuvA-RuvB complex plays an important role in the rescue of blocked DNA replication forks via replication fork reversal (RFR). RuvA specifically binds to HJ cruciform DNA, conferring on it an open structure. The RuvB hexamer acts as an ATP-dependent pump, pulling dsDNA into and through the RuvAB complex. RuvB forms 2 homohexamers on either side of HJ DNA bound by 1 or 2 RuvA tetramers; 4 subunits per hexamer contact DNA at a time. Coordinated motions by a converter formed by DNA-disengaged RuvB subunits stimulates ATP hydrolysis and nucleotide exchange. Immobilization of the converter enables RuvB to convert the ATP-contained energy into a lever motion, pulling 2 nucleotides of DNA out of the RuvA tetramer per ATP hydrolyzed, thus driving DNA branch migration. The RuvB motors rotate together with the DNA substrate, which together with the progressing nucleotide cycle form the mechanistic basis for DNA recombination by continuous HJ branch migration. Branch migration allows RuvC to scan DNA until it finds its consensus sequence, where it cleaves and resolves cruciform DNA. This is Holliday junction branch migration complex subunit RuvB from Bordetella avium (strain 197N).